A 218-amino-acid chain; its full sequence is MSETAPVAAPAVSAPGAKAAAKKPKKAAGGAKPRKPAGPSVTELITKAVSASKERKGLSLAALKKALAAGGYDVEKNNSRIKLGLKSLVSKGTLVQTKGTGASGSFKLNKKPGETKAKATKKKPAAKPKKPAAKKPAAAAKKPKKAAAVKKSPKKAKKPAAAATKKAAKSPKKATKAGRPKKTAKSPAKAKAVKPKAAKSKAAKPKAAKAKKAATKKK.

Low complexity predominate over residues 1–19 (MSETAPVAAPAVSAPGAKA). Disordered regions lie at residues 1–42 (MSET…PSVT) and 89–218 (VSKG…TKKK). The residue at position 2 (serine 2) is an N-acetylserine. The H15 domain occupies 37 to 110 (AGPSVTELIT…GASGSFKLNK (74 aa)). 4 stretches are compositionally biased toward basic residues: residues 118–133 (KATKKKPAAKPKKPAA), 141–158 (KKPKKAAAVKKSPKKAKK), 166–184 (KAAKSPKKATKAGRPKKTA), and 191–218 (KAVKPKAAKSKAAKPKAAKAKKAATKKK).

Belongs to the histone H1/H5 family.

The protein resides in the nucleus. It is found in the chromosome. In terms of biological role, histones H1 are necessary for the condensation of nucleosome chains into higher-order structures. In Gallus gallus (Chicken), this protein is Histone H1.